The primary structure comprises 360 residues: S-adenosylmethionine:tRNA ribosyltransferase-isomerase (360 aa).

Belongs to the QueA family. In terms of assembly, monomer.

The protein resides in the cytoplasm. It catalyses the reaction 7-aminomethyl-7-carbaguanosine(34) in tRNA + S-adenosyl-L-methionine = epoxyqueuosine(34) in tRNA + adenine + L-methionine + 2 H(+). It participates in tRNA modification; tRNA-queuosine biosynthesis. Functionally, transfers and isomerizes the ribose moiety from AdoMet to the 7-aminomethyl group of 7-deazaguanine (preQ1-tRNA) to give epoxyqueuosine (oQ-tRNA). This Rhizobium meliloti (strain 1021) (Ensifer meliloti) protein is S-adenosylmethionine:tRNA ribosyltransferase-isomerase.